Consider the following 234-residue polypeptide: Thioredoxin-dependent peroxide reductase, mitochondrial (234 aa).

The N-terminal 30 residues, 1–30 (MSFVARSLIRNVPLMGKAILSQQKQIAARL), are a transit peptide targeting the mitochondrion. The Thioredoxin domain maps to 40 to 198 (VRVQQPAPDF…VLRLIKAFQF (159 aa)). Cysteine 85 (cysteine sulfenic acid (-SOH) intermediate) is an active-site residue.

It belongs to the peroxiredoxin family. AhpC/Prx1 subfamily. In terms of assembly, homodimer; disulfide-linked, upon oxidation. 6 homodimers assemble to form a ring-like dodecamer. Also exists as a monomer, however the monomeric form is present at a much lower level than the homodimeric form. In terms of tissue distribution, expressed in thoracic flight muscles (at protein level). Detected in the head and body (at protein level).

It is found in the mitochondrion. It carries out the reaction a hydroperoxide + [thioredoxin]-dithiol = an alcohol + [thioredoxin]-disulfide + H2O. Thiol-specific peroxidase that catalyzes the reduction of hydrogen peroxide and organic hydroperoxides to water and alcohols, respectively. Plays a role in cell protection against oxidative stress by detoxifying peroxides. May be involved in aging-associated changes in the responsiveness to oxidative stress. Involved in the maintenance of global thiol redox homeostasis. Functions in the central nervous system (CNS) and in motor neurons and is essential for normal motor function. This Drosophila melanogaster (Fruit fly) protein is Thioredoxin-dependent peroxide reductase, mitochondrial.